Consider the following 103-residue polypeptide: Small ribosomal subunit protein uS10 (103 aa).

The protein belongs to the universal ribosomal protein uS10 family. As to quaternary structure, part of the 30S ribosomal subunit.

In terms of biological role, involved in the binding of tRNA to the ribosomes. The protein is Small ribosomal subunit protein uS10 of Alteromonas mediterranea (strain DSM 17117 / CIP 110805 / LMG 28347 / Deep ecotype).